A 492-amino-acid chain; its full sequence is Solute carrier family 2, facilitated glucose transporter member 1 (492 aa).

M1 carries the post-translational modification N-acetylmethionine. Residues 1–11 (MEPSSKKLTGR) are Cytoplasmic-facing. The helical transmembrane segment at 12–33 (LMLAVGGAVLGSLQFGYNTGVI) threads the bilayer. The Extracellular segment spans residues 34–66 (NAPQKVIEEFYNQTWVHRYGESILPTTLTTLWS). The N-linked (GlcNAc...) asparagine glycan is linked to N45. Residues 67 to 87 (LSVAIFSVGGMIGSFSVGLFV) form a helical membrane-spanning segment. The Cytoplasmic portion of the chain corresponds to 88–90 (NRF). The helical transmembrane segment at 91-112 (GRRNSMLMMNLLAFVSAVLMGF) threads the bilayer. The Extracellular segment spans residues 113–120 (SKLGKSFE). The helical transmembrane segment at 121 to 144 (MLILGRFIIGVYCGLTTGFVPMYV) threads the bilayer. T137 contributes to the cytochalasin B binding site. The Cytoplasmic segment spans residues 145–155 (GEVSPTALRGA). The chain crosses the membrane as a helical span at residues 156–176 (LGTLHQLGIVVGILIAQVFGL). The Extracellular portion of the chain corresponds to 177-185 (DSIMGNKDL). Residues 186-206 (WPLLLSIIFIPALLQCIVLPF) form a helical membrane-spanning segment. The Cytoplasmic portion of the chain corresponds to 207–271 (CPESPRFLLI…LFRSPAYRQP (65 aa)). S226 carries the post-translational modification Phosphoserine; by PKC/PRKCB. A helical transmembrane segment spans residues 272-293 (ILIAVVLQLSQQLSGINAVFYY). Residue Q282 coordinates cytochalasin B. Residues 282 to 283 (QQ) and N288 contribute to the D-glucose site. Topologically, residues 294-306 (STSIFEKAGVQQP) are extracellular. The helical transmembrane segment at 307-328 (VYATIGSGIVNTAFTVVSLFVV) threads the bilayer. N317 contributes to the D-glucose binding site. The Cytoplasmic segment spans residues 329–334 (ERAGRR). Residues 335 to 355 (TLHLIGLAGMAGCAILMTIAL) form a helical membrane-spanning segment. Topologically, residues 356–365 (ALLEQLPWMS) are extracellular. The helical transmembrane segment at 366-388 (YLSIVAIFGFVAFFEVGPGPIPW) threads the bilayer. Position 380 (E380) interacts with D-glucose. Residue W388 coordinates cytochalasin B. Residues 389-401 (FIVAELFSQGPRP) are Cytoplasmic-facing. A helical transmembrane segment spans residues 402 to 422 (AAIAVAGFSNWTSNFIVGMCF). N411 contributes to the cytochalasin B binding site. The Extracellular portion of the chain corresponds to 423-429 (QYVEQLC). The chain crosses the membrane as a helical span at residues 430-450 (GPYVFIIFTVLLVLFFIFTYF). At 451–492 (KVPETKGRTFDEIASGFRQGGASQSDKTPEELFHPLGADSQV) the chain is on the cytoplasmic side. S465 is subject to Phosphoserine. A disordered region spans residues 468 to 492 (RQGGASQSDKTPEELFHPLGADSQV). T478 bears the Phosphothreonine mark. A Phosphoserine modification is found at S490.

Belongs to the major facilitator superfamily. Sugar transporter (TC 2.A.1.1) family. Glucose transporter subfamily. As to quaternary structure, interacts with GIPC (via PDZ domain). Found in a complex with ADD2, DMTN and SLC2A1. Interacts (via C-terminus cytoplasmic region) with DMTN isoform 2. Interacts with SNX27; the interaction is required when endocytosed to prevent degradation in lysosomes and promote recycling to the plasma membrane. Interacts with STOM. Interacts with SGTA (via Gln-rich region). Interacts with isoform 1 of BSG. Phosphorylation at Ser-226 by PKC promotes glucose uptake by increasing cell membrane localization. Detected in erythrocytes (at protein level). Expressed at variable levels in many human tissues.

The protein resides in the cell membrane. It localises to the melanosome. It is found in the photoreceptor inner segment. The catalysed reaction is D-glucose(out) = D-glucose(in). It functions in the pathway carbohydrate degradation. Its activity is regulated as follows. The uptake of glucose is inhibited by cytochalasin B and Phe-amide core-scaffold inhibitors GLUT-i1 and GLUT-i2. These inhibitors bind in the central cavity of the inward-open state and overlap the glucose-binding site. Glucose uptake is increased in response to phorbol ester 12-O-tetradecanoylphorbol-13-acetate (TPA) treatment: TPA-induced glucose uptake requires phosphorylation at Ser-226. Interacts with SMIM43; the interaction may promote SLC2A1-mediated glucose transport to meet the energy needs of mesendoderm differentiation. Its function is as follows. Facilitative glucose transporter, which is responsible for constitutive or basal glucose uptake. Has a very broad substrate specificity; can transport a wide range of aldoses including both pentoses and hexoses. Most important energy carrier of the brain: present at the blood-brain barrier and assures the energy-independent, facilitative transport of glucose into the brain. In association with BSG and NXNL1, promotes retinal cone survival by increasing glucose uptake into photoreceptors. Required for mesendoderm differentiation. This is Solute carrier family 2, facilitated glucose transporter member 1 from Homo sapiens (Human).